The sequence spans 1059 residues: Tyrosine-protein kinase-like otk (1059 aa).

Residues 1–23 (MDMLMMWSICLFVCIFMAPFSCG) form the signal peptide. The Extracellular segment spans residues 24 to 597 (SGSSSRFIQV…GDGGFLATRA (574 aa)). 5 Ig-like C2-type domains span residues 28 to 112 (SRFI…REAS), 113 to 202 (PTAK…RVMS), 258 to 377 (PEGL…LAIN), 380 to 475 (PGIL…VSIN), and 480 to 570 (PKFS…AVLT). The N-linked (GlcNAc...) asparagine glycan is linked to Asn-42. 4 disulfide bridges follow: Cys-49/Cys-99, Cys-141/Cys-191, Cys-283/Cys-366, and Cys-411/Cys-459. N-linked (GlcNAc...) asparagine glycans are attached at residues Asn-348, Asn-429, Asn-441, Asn-456, Asn-469, Asn-524, and Asn-536. A disulfide bond links Cys-502 and Cys-554. The chain crosses the membrane as a helical span at residues 598-618 (VLITMTVALAYIVLVVGLMLW). The Cytoplasmic portion of the chain corresponds to 619 to 1059 (CRYRRQARKA…ALSKAMQNSE (441 aa)). Residues 639–695 (GGEQAGGEGSTSGNPKASEQEPCLGKQQRNGRNGKSKSNGDPQKSDDTACSQQSRAS) form a disordered region. Residues 665–693 (QQRNGRNGKSKSNGDPQKSDDTACSQQSR) are compositionally biased toward polar residues. Position 698 is a phosphoserine (Ser-698). The 344-residue stretch at 712–1055 (LSELIQIGRG…QLGAALSKAM (344 aa)) folds into the Protein kinase; inactive domain. A disordered region spans residues 739–781 (AQANDKDSDNDKQHSNSENGSGGSSGSTTLSTLNEKRRSKTSM). Basic and acidic residues predominate over residues 742–753 (NDKDSDNDKQHS).

This sequence belongs to the protein kinase superfamily. Tyr protein kinase family. Insulin receptor subfamily. As to quaternary structure, interacts with plexA; component of a receptor complex that mediates the repulsive signaling in response to Semaphorin ligands.

The protein localises to the cell membrane. Functionally, acts as a calcium-dependent, homophilic cell adhesion molecule that regulates neural recognition during the development of the nervous system. Component of the repulsive Plexin signaling response to regulate motor axon guidance at the embryonic stage. Also component of a receptor complex that is required in the adult visual system to innervate the lamina layer; specific targeting of R1-R6 axons. The polypeptide is Tyrosine-protein kinase-like otk (Drosophila willistoni (Fruit fly)).